The primary structure comprises 275 residues: Dermonecrotic toxin SpeSicTox-betaIIA1 (275 aa).

Residue His-5 is part of the active site. Glu-25 and Asp-27 together coordinate Mg(2+). The Nucleophile role is filled by His-41. Intrachain disulfides connect Cys-45/Cys-51 and Cys-47/Cys-190. Asp-85 is a binding site for Mg(2+).

Belongs to the arthropod phospholipase D family. Class II subfamily. It depends on Mg(2+) as a cofactor. Expressed by the venom gland.

Its subcellular location is the secreted. It carries out the reaction an N-(acyl)-sphingosylphosphocholine = an N-(acyl)-sphingosyl-1,3-cyclic phosphate + choline. It catalyses the reaction an N-(acyl)-sphingosylphosphoethanolamine = an N-(acyl)-sphingosyl-1,3-cyclic phosphate + ethanolamine. The enzyme catalyses a 1-acyl-sn-glycero-3-phosphocholine = a 1-acyl-sn-glycero-2,3-cyclic phosphate + choline. The catalysed reaction is a 1-acyl-sn-glycero-3-phosphoethanolamine = a 1-acyl-sn-glycero-2,3-cyclic phosphate + ethanolamine. In terms of biological role, dermonecrotic toxins cleave the phosphodiester linkage between the phosphate and headgroup of certain phospholipids (sphingolipid and lysolipid substrates), forming an alcohol (often choline) and a cyclic phosphate. This toxin acts on sphingomyelin (SM). It may also act on ceramide phosphoethanolamine (CPE), lysophosphatidylcholine (LPC) and lysophosphatidylethanolamine (LPE), but not on lysophosphatidylserine (LPS), and lysophosphatidylglycerol (LPG). It acts by transphosphatidylation, releasing exclusively cyclic phosphate products as second products. Induces dermonecrosis, hemolysis, increased vascular permeability, edema, inflammatory response, and platelet aggregation. The chain is Dermonecrotic toxin SpeSicTox-betaIIA1 from Sicarius peruensis (Six-eyed sand spider).